Here is an 832-residue protein sequence, read N- to C-terminus: Valine--tRNA ligase (832 aa).

Residues 41–51 (PNVTGKLHLGH) carry the 'HIGH' region motif. A 'KMSKS' region motif is present at residues 512-516 (KMSKS). K515 contributes to the ATP binding site. Positions 760 to 831 (FIEISQEQKQ…QIYLEELKWK (72 aa)) form a coiled coil.

It belongs to the class-I aminoacyl-tRNA synthetase family. ValS type 1 subfamily. In terms of assembly, monomer.

Its subcellular location is the cytoplasm. It catalyses the reaction tRNA(Val) + L-valine + ATP = L-valyl-tRNA(Val) + AMP + diphosphate. Its function is as follows. Catalyzes the attachment of valine to tRNA(Val). As ValRS can inadvertently accommodate and process structurally similar amino acids such as threonine, to avoid such errors, it has a 'posttransfer' editing activity that hydrolyzes mischarged Thr-tRNA(Val) in a tRNA-dependent manner. The polypeptide is Valine--tRNA ligase (Mycoplasmopsis synoviae (strain 53) (Mycoplasma synoviae)).